The primary structure comprises 297 residues: UDP-N-acetylenolpyruvoylglucosamine reductase (297 aa).

The FAD-binding PCMH-type domain occupies 26–191 (KSGGTADWLF…VAARFRGHPG (166 aa)). Residue R171 is part of the active site. S220 (proton donor) is an active-site residue. The active site involves E290.

This sequence belongs to the MurB family. FAD is required as a cofactor.

The protein resides in the cytoplasm. It carries out the reaction UDP-N-acetyl-alpha-D-muramate + NADP(+) = UDP-N-acetyl-3-O-(1-carboxyvinyl)-alpha-D-glucosamine + NADPH + H(+). It participates in cell wall biogenesis; peptidoglycan biosynthesis. In terms of biological role, cell wall formation. In Novosphingobium aromaticivorans (strain ATCC 700278 / DSM 12444 / CCUG 56034 / CIP 105152 / NBRC 16084 / F199), this protein is UDP-N-acetylenolpyruvoylglucosamine reductase.